Here is a 257-residue protein sequence, read N- to C-terminus: DNA repair protein RecO (257 aa).

It belongs to the RecO family.

Involved in DNA repair and RecF pathway recombination. The protein is DNA repair protein RecO of Streptococcus thermophilus (strain ATCC BAA-491 / LMD-9).